The chain runs to 230 residues: Probable fimbrial chaperone SfmC (230 aa).

Positions 1–23 are cleaved as a signal peptide; that stretch reads MMTKIKLLMLIIFYLIISASAHA.

Belongs to the periplasmic pilus chaperone family.

The protein resides in the periplasm. In terms of biological role, part of the sfmACDHF fimbrial operon. Could contribute to adhesion to various surfaces in specific environmental niches. Increases adhesion to eukaryotic T24 bladder epithelial cells in the absence of fim genes. The chain is Probable fimbrial chaperone SfmC (sfmC) from Escherichia coli (strain K12).